Reading from the N-terminus, the 463-residue chain is Elongation factor 1-alpha 2 (463 aa).

Glycine 2 carries the post-translational modification N,N,N-trimethylglycine. The 238-residue stretch at 5–242 (KTHINIVVIG…DTILPPTRPT (238 aa)) folds into the tr-type G domain. A G1 region spans residues 14-21 (GHVDSGKS). GTP contacts are provided by aspartate 17, serine 18, glycine 19, lysine 20, serine 21, and threonine 22. Aspartate 17 serves as a coordination point for Mg(2+). An N6,N6,N6-trimethyllysine; alternate modification is found at lysine 36. Lysine 36 is subject to N6,N6-dimethyllysine; alternate. Lysine 36 carries the post-translational modification N6-methyllysine; alternate. Residue lysine 55 is modified to N6,N6,N6-trimethyllysine. An N6,N6-dimethyllysine modification is found at lysine 55. Residues 70–74 (GITID) form a G2 region. Lysine 79 bears the N6,N6,N6-trimethyllysine mark. Positions 91–94 (DAPG) are G3. Residues asparagine 153, lysine 154, and aspartate 156 each coordinate GTP. The tract at residues 153–156 (NKMD) is G4. Residue serine 163 is modified to Phosphoserine. An N6,N6-dimethyllysine; alternate modification is found at lysine 165. Lysine 165 carries the N6-methyllysine; alternate modification. Residue lysine 165 is modified to N6,N6,N6-trimethyllysine; alternate; by EEF1AKMT3. At lysine 179 the chain carries N6-acetyllysine. GTP contacts are provided by serine 194, glycine 195, and tryptophan 196. The interval 194–196 (SGW) is G5. Serine 224 is modified (phosphoserine). Threonine 239 is subject to Phosphothreonine. Residues glutamate 301 and glutamate 374 each carry the 5-glutamyl glycerylphosphorylethanolamine modification. Lysine 439 bears the N6-acetyllysine mark. A disordered region spans residues 444-463 (KSGGAGKVTKSAQKAQKAGK).

The protein belongs to the TRAFAC class translation factor GTPase superfamily. Classic translation factor GTPase family. EF-Tu/EF-1A subfamily. As to quaternary structure, homodimer; arranged in a 'head to tail' dimer configuration. Post-translationally, trimethylated at Lys-165 by EEF1AKMT3. Mono-, di-, and trimethylated at Lys-36 by EEF1AKMT4; trimethylated form is predominant. Methylation by EEF1AKMT4 contributes to the fine-tuning of translation rates for a subset of tRNAs. Trimethylated at the N-terminus and dimethylated at Lys-55 by METTL13.

It is found in the endoplasmic reticulum membrane. The enzyme catalyses GTP + H2O = GDP + phosphate + H(+). Translation elongation factor that catalyzes the GTP-dependent binding of aminoacyl-tRNA (aa-tRNA) to the A-site of ribosomes during the elongation phase of protein synthesis. Base pairing between the mRNA codon and the aa-tRNA anticodon promotes GTP hydrolysis, releasing the aa-tRNA from EEF1A1 and allowing its accommodation into the ribosome. The growing protein chain is subsequently transferred from the P-site peptidyl tRNA to the A-site aa-tRNA, extending it by one amino acid through ribosome-catalyzed peptide bond formation. The protein is Elongation factor 1-alpha 2 (EEF1A2) of Bos taurus (Bovine).